A 431-amino-acid polypeptide reads, in one-letter code: Histidinol dehydrogenase (431 aa).

Residues Tyr127, Gln185, and Asn208 each coordinate NAD(+). Substrate contacts are provided by Ser234, Gln256, and His259. Zn(2+)-binding residues include Gln256 and His259. Active-site proton acceptor residues include Glu323 and His324. Residues His324, Asp357, Glu411, and His416 each contribute to the substrate site. Asp357 contributes to the Zn(2+) binding site. A Zn(2+)-binding site is contributed by His416.

It belongs to the histidinol dehydrogenase family. Zn(2+) is required as a cofactor.

The catalysed reaction is L-histidinol + 2 NAD(+) + H2O = L-histidine + 2 NADH + 3 H(+). The protein operates within amino-acid biosynthesis; L-histidine biosynthesis; L-histidine from 5-phospho-alpha-D-ribose 1-diphosphate: step 9/9. Its function is as follows. Catalyzes the sequential NAD-dependent oxidations of L-histidinol to L-histidinaldehyde and then to L-histidine. The sequence is that of Histidinol dehydrogenase from Vibrio vulnificus (strain YJ016).